A 376-amino-acid chain; its full sequence is Chaperone protein DnaJ (376 aa).

The J domain occupies 5–70 (DYYETLGVQK…EKRAAYDQYG (66 aa)). The segment at 133–211 (GTTKDIKINT…CHGDGRVHKK (79 aa)) adopts a CR-type zinc-finger fold. 8 residues coordinate Zn(2+): cysteine 146, cysteine 149, cysteine 163, cysteine 166, cysteine 185, cysteine 188, cysteine 199, and cysteine 202. CXXCXGXG motif repeat units follow at residues 146-153 (CDHCDGSG), 163-170 (CPTCHGHG), 185-192 (CPTCQGSG), and 199-206 (CKHCHGDG).

The protein belongs to the DnaJ family. Homodimer. Zn(2+) serves as cofactor.

It is found in the cytoplasm. In terms of biological role, participates actively in the response to hyperosmotic and heat shock by preventing the aggregation of stress-denatured proteins and by disaggregating proteins, also in an autonomous, DnaK-independent fashion. Unfolded proteins bind initially to DnaJ; upon interaction with the DnaJ-bound protein, DnaK hydrolyzes its bound ATP, resulting in the formation of a stable complex. GrpE releases ADP from DnaK; ATP binding to DnaK triggers the release of the substrate protein, thus completing the reaction cycle. Several rounds of ATP-dependent interactions between DnaJ, DnaK and GrpE are required for fully efficient folding. Also involved, together with DnaK and GrpE, in the DNA replication of plasmids through activation of initiation proteins. This is Chaperone protein DnaJ from Mannheimia succiniciproducens (strain KCTC 0769BP / MBEL55E).